A 269-amino-acid chain; its full sequence is UPF0162 protein BU173 (269 aa).

This sequence belongs to the UPF0162 family.

The polypeptide is UPF0162 protein BU173 (Buchnera aphidicola subsp. Acyrthosiphon pisum (strain APS) (Acyrthosiphon pisum symbiotic bacterium)).